The chain runs to 444 residues: Argininosuccinate synthase (444 aa).

Residues 17–25 (AFSGGLDTS) and alanine 43 contribute to the ATP site. Residue tyrosine 99 participates in L-citrulline binding. ATP contacts are provided by glycine 129 and threonine 131. The L-aspartate site is built by threonine 131, asparagine 135, and aspartate 136. L-citrulline is bound at residue asparagine 135. Aspartate 136 is a binding site for ATP. L-citrulline contacts are provided by arginine 139 and serine 192. ATP is bound at residue aspartate 194. L-citrulline-binding residues include threonine 201, glutamate 203, and glutamate 280.

Belongs to the argininosuccinate synthase family. Type 2 subfamily. As to quaternary structure, homotetramer.

Its subcellular location is the cytoplasm. It carries out the reaction L-citrulline + L-aspartate + ATP = 2-(N(omega)-L-arginino)succinate + AMP + diphosphate + H(+). The protein operates within amino-acid biosynthesis; L-arginine biosynthesis; L-arginine from L-ornithine and carbamoyl phosphate: step 2/3. The sequence is that of Argininosuccinate synthase from Burkholderia lata (strain ATCC 17760 / DSM 23089 / LMG 22485 / NCIMB 9086 / R18194 / 383).